Consider the following 185-residue polypeptide: Probable RNA 2'-phosphotransferase (185 aa).

This sequence belongs to the KptA/TPT1 family.

Its function is as follows. Removes the 2'-phosphate from RNA via an intermediate in which the phosphate is ADP-ribosylated by NAD followed by a presumed transesterification to release the RNA and generate ADP-ribose 1''-2''-cyclic phosphate (APPR&gt;P). May function as an ADP-ribosylase. This chain is Probable RNA 2'-phosphotransferase, found in Bacillus thuringiensis subsp. konkukian (strain 97-27).